A 955-amino-acid chain; its full sequence is Isoleucine--tRNA ligase (955 aa).

Residues 58–68 (IYANGDIHIGH) carry the 'HIGH' region motif. Glutamate 552 contacts L-isoleucyl-5'-AMP. A 'KMSKS' region motif is present at residues 593-597 (KMSKS). Lysine 596 is a binding site for ATP. Zn(2+)-binding residues include cysteine 918, cysteine 921, cysteine 938, and cysteine 941.

Belongs to the class-I aminoacyl-tRNA synthetase family. IleS type 1 subfamily. In terms of assembly, monomer. The cofactor is Zn(2+).

It is found in the cytoplasm. The enzyme catalyses tRNA(Ile) + L-isoleucine + ATP = L-isoleucyl-tRNA(Ile) + AMP + diphosphate. Catalyzes the attachment of isoleucine to tRNA(Ile). As IleRS can inadvertently accommodate and process structurally similar amino acids such as valine, to avoid such errors it has two additional distinct tRNA(Ile)-dependent editing activities. One activity is designated as 'pretransfer' editing and involves the hydrolysis of activated Val-AMP. The other activity is designated 'posttransfer' editing and involves deacylation of mischarged Val-tRNA(Ile). This Vesicomyosocius okutanii subsp. Calyptogena okutanii (strain HA) protein is Isoleucine--tRNA ligase.